The following is a 239-amino-acid chain: Prolactin-8A4 (239 aa).

Positions 1–31 (MMKLALSQPPFSGTLLMLVVSILLLWEKAAS) are cleaved as a signal peptide. 2 cysteine pairs are disulfide-bonded: Cys-35–Cys-42 and Cys-102–Cys-215. N-linked (GlcNAc...) asparagine glycans are attached at residues Asn-211 and Asn-218. A disulfide bond links Cys-232 and Cys-239.

It belongs to the somatotropin/prolactin family. In terms of tissue distribution, placental basal zone cells.

The protein localises to the secreted. This chain is Prolactin-8A4 (Prl8a4), found in Rattus norvegicus (Rat).